The primary structure comprises 355 residues: Protein ECERIFERUM 16 (355 aa).

2 disordered regions span residues 1–60 (MDSK…LPSN) and 296–315 (HSST…KIHM). Residues 7 to 28 (AKSKRAHTLHHSKKSHSVHKPK) show a composition bias toward basic residues. Composition is skewed to polar residues over residues 41–53 (QGNQ…QSRR) and 296–310 (HSST…NPSD).

As to quaternary structure, interacts with RST1. In terms of tissue distribution, expressed in taproots, lateral roots, root tips, leaf veins, cauline leaves, inflorescences, flowers, and siliques.

It is found in the cytoplasm. The protein localises to the cytosol. Its subcellular location is the endoplasmic reticulum. Together with RST1, acts as a cofactor of the cytoplasmic exosome and connects the cytosolic RNA exosome to the SKI complex. Acts as a post-transcriptional gene silencing (PTGS) suppressor. CER16/RIPR can, like RST1 suppress the production of small interfering RNAs (siRNAs) from the CER3 locus, which is involved in cuticule membrane and wax production, and in the typhine and sporopollenin biosynthesis of pollen. In Arabidopsis thaliana (Mouse-ear cress), this protein is Protein ECERIFERUM 16.